The chain runs to 354 residues: Glyceraldehyde-3-phosphate dehydrogenase (354 aa).

Residues 11-12 (TI) and glycine 108 contribute to the NAD(+) site. 137–139 (SCN) serves as a coordination point for D-glyceraldehyde 3-phosphate. Residue cysteine 138 is the Nucleophile of the active site. Residue arginine 166 coordinates NAD(+). 192–193 (HG) contacts D-glyceraldehyde 3-phosphate. Position 299 (glutamine 299) interacts with NAD(+).

It belongs to the glyceraldehyde-3-phosphate dehydrogenase family. As to quaternary structure, homotetramer.

Its subcellular location is the cytoplasm. The enzyme catalyses D-glyceraldehyde 3-phosphate + phosphate + NADP(+) = (2R)-3-phospho-glyceroyl phosphate + NADPH + H(+). It carries out the reaction D-glyceraldehyde 3-phosphate + phosphate + NAD(+) = (2R)-3-phospho-glyceroyl phosphate + NADH + H(+). It participates in carbohydrate degradation; glycolysis; pyruvate from D-glyceraldehyde 3-phosphate: step 1/5. The polypeptide is Glyceraldehyde-3-phosphate dehydrogenase (Haloarcula marismortui (strain ATCC 43049 / DSM 3752 / JCM 8966 / VKM B-1809) (Halobacterium marismortui)).